Consider the following 87-residue polypeptide: Defensin-like protein 223 (87 aa).

The signal sequence occupies residues Met-1–Ile-34. 3 disulfides stabilise this stretch: Cys-55–Cys-72, Cys-58–Cys-77, and Cys-62–Cys-79.

The protein belongs to the DEFL family.

It localises to the secreted. The sequence is that of Defensin-like protein 223 from Arabidopsis thaliana (Mouse-ear cress).